Consider the following 774-residue polypeptide: Fe(3+) dicitrate transport protein FecA (774 aa).

The signal sequence occupies residues 1–33 (MTPLRVFRKTTPLVNTIRLSLLPLAGLSFSAFA). Positions 56-63 (FTLSVDAS) match the TonB box motif. The region spanning 129–250 (DVFEHAGARD…VGGVVNFVTR (122 aa)) is the TBDR plug domain. Positions 255–774 (DFGIEAGVEG…TLYMQGSLKF (520 aa)) constitute a TBDR beta-barrel domain. The TonB C-terminal box signature appears at 757–774 (GIYAGQPRTLYMQGSLKF).

Belongs to the TonB-dependent receptor family. In terms of assembly, interacts (via periplasmic N-terminus) with FecR (via periplasmic C-terminus).

The protein localises to the cell outer membrane. Its function is as follows. FecA is the outer membrane receptor protein in the Fe(3+) dicitrate transport system. This Escherichia coli (strain K12) protein is Fe(3+) dicitrate transport protein FecA (fecA).